The sequence spans 155 residues: uncharacterized protein (155 aa).

The disordered stretch occupies residues 56–79 (GEKRPTHRRPYRRTKPYPKRPSML). A compositionally biased stretch (basic residues) spans 60-73 (PTHRRPYRRTKPYP).

This is an uncharacterized protein from Sinorhizobium fredii (strain NBRC 101917 / NGR234).